We begin with the raw amino-acid sequence, 69 residues long: MRKKQKSAVENETVYLHTRGVIKDNAVMALLGDKLFRQRVEKKRKGKGSYQRKAKHPGKIFEKPDYKFF.

This sequence belongs to the alternative ribosome-rescue factor A family. In terms of assembly, interacts with the 70S ribosome and release factor 2.

Rescues ribosomes stalled at the 3' end of non-stop mRNAs. Recruits release factor 2 (RF2) to the stalled ribosome, helping position it correctly in the ribosomal A site so its GGQ motif can hydrolyze the peptidyl-tRNA bond. The chain is Alternative ribosome-rescue factor A (arfA) from Haemophilus influenzae (strain ATCC 51907 / DSM 11121 / KW20 / Rd).